We begin with the raw amino-acid sequence, 372 residues long: Cytochrome b (372 aa).

4 consecutive transmembrane segments (helical) span residues 25–45 (FGSM…FLAI), 69–90 (WIMQ…YIHI), 105–125 (WLSG…GYVL), and 170–190 (FFAL…IHIM). His75 and His89 together coordinate heme b. The heme b site is built by His174 and His188. His193 lines the a ubiquinone pocket. 4 helical membrane-spanning segments follow: residues 218-238 (YKDM…LSFS), 280-300 (LGGT…PFTH), 312-332 (LSQI…WTAS), and 339-358 (FILI…IMAP).

Belongs to the cytochrome b family. In terms of assembly, the cytochrome bc1 complex contains 3 respiratory subunits (MT-CYB, CYC1 and UQCRFS1), 2 core proteins (UQCRC1 and UQCRC2) and probably 6 low-molecular weight proteins. Heme b is required as a cofactor.

The protein resides in the mitochondrion inner membrane. Its function is as follows. Component of the ubiquinol-cytochrome c reductase complex (complex III or cytochrome b-c1 complex) that is part of the mitochondrial respiratory chain. The b-c1 complex mediates electron transfer from ubiquinol to cytochrome c. Contributes to the generation of a proton gradient across the mitochondrial membrane that is then used for ATP synthesis. This chain is Cytochrome b (MT-CYB), found in Hemachatus haemachatus (Rinkhals).